The following is a 121-amino-acid chain: Large ribosomal subunit protein eL18 (121 aa).

The protein belongs to the eukaryotic ribosomal protein eL18 family. In terms of assembly, part of the 50S ribosomal subunit.

The protein is Large ribosomal subunit protein eL18 of Thermococcus kodakarensis (strain ATCC BAA-918 / JCM 12380 / KOD1) (Pyrococcus kodakaraensis (strain KOD1)).